The primary structure comprises 171 residues: MSSKRAKAKTTKKRPQSATSNVFAMFDQSQIQEFKEAFNMIDQNRDGFIDKEDLHDMLASLGKNPTDEXLEGMMNEAPGPINFTMFLTMFGEKLNGTDPEDVIRNAFACFDEEASGFIHEDHLRELLTTMGDRFTDEEVDEMYRERIDKKGNFNYVEFTRILKHGAKDKDD.

The segment covering 1–15 has biased composition (basic residues); that stretch reads MSSKRAKAKTTKKRP. A disordered region spans residues 1–21; the sequence is MSSKRAKAKTTKKRPQSATSN. Ser2 bears the N-acetylserine mark. Thr19 bears the Phosphothreonine; by MLCK, CIT and ROCK2 mark. Ser20 bears the Phosphoserine; by CDC42BP, CIT, MLCK, PAK1, ROCK1, ROCK2, DAPK1, DAPK2 and ZIPK/DAPK3 mark. 2 consecutive EF-hand domains span residues 29–64 and 98–133; these read SQIQ…LGKN and DPED…MGDR. Residues Asp42, Asn44, Asp46, and Asp53 each contribute to the Ca(2+) site.

As to quaternary structure, myosin is a hexamer of 2 heavy chains and 4 light chains: interacts with myosin heavy chain MYO19. Interacts with LUZP1; the interaction results in inhibition of phosphorylation of MYL9 by DAPK3. Post-translationally, phosphorylation increases the actin-activated myosin ATPase activity and thereby regulates the contractile activity. It is required to generate the driving force in the migration of the cells but not necessary for localization of myosin-2 at the leading edge. Phosphorylation is required for myotube formation. Phosphorylated by DAPK3; DAPK3-mediated phosphorylation is inhibited by LUZP1. As to expression, smooth muscle tissues and in some, but not all, nonmuscle cells.

The protein localises to the cytoplasm. It is found in the cytoskeleton. Its subcellular location is the cell cortex. In terms of biological role, myosin regulatory subunit that plays an important role in regulation of both smooth muscle and nonmuscle cell contractile activity via its phosphorylation. Implicated in cytokinesis, receptor capping, and cell locomotion. In myoblasts, may regulate PIEZO1-dependent cortical actomyosin assembly involved in myotube formation. The protein is Myosin regulatory light polypeptide 9 (Myl9) of Rattus norvegicus (Rat).